The chain runs to 378 residues: Quinolinate synthase (378 aa).

Iminosuccinate is bound by residues histidine 59 and serine 80. Residue cysteine 125 participates in [4Fe-4S] cluster binding. Residues 151 to 153 and serine 168 contribute to the iminosuccinate site; that span reads YAN. Cysteine 212 is a binding site for [4Fe-4S] cluster. Iminosuccinate-binding positions include 238 to 240 and threonine 255; that span reads HPE. Cysteine 309 lines the [4Fe-4S] cluster pocket.

The protein belongs to the quinolinate synthase family. Type 1 subfamily. It depends on [4Fe-4S] cluster as a cofactor.

Its subcellular location is the cytoplasm. The catalysed reaction is iminosuccinate + dihydroxyacetone phosphate = quinolinate + phosphate + 2 H2O + H(+). It participates in cofactor biosynthesis; NAD(+) biosynthesis; quinolinate from iminoaspartate: step 1/1. Its function is as follows. Catalyzes the condensation of iminoaspartate with dihydroxyacetone phosphate to form quinolinate. The chain is Quinolinate synthase from Burkholderia cenocepacia (strain HI2424).